Here is a 507-residue protein sequence, read N- to C-terminus: Alpha-amylase 2 (507 aa).

The first 20 residues, 1-20, serve as a signal peptide directing secretion; that stretch reads MKFATILSTTALALSSLVAS. A disulfide bridge links Cys-62 with Cys-70. Trp-115 contributes to the substrate binding site. Asn-153 is a Ca(2+) binding site. His-154 is a substrate binding site. An intrachain disulfide couples Cys-182 to Cys-196. Positions 194 and 207 each coordinate Ca(2+). The N-linked (GlcNAc...) asparagine glycan is linked to Asn-229. Arg-236 contributes to the substrate binding site. Residues Asp-238, His-242, and Glu-262 each contribute to the Ca(2+) site. The Nucleophile role is filled by Asp-238. 241-242 is a binding site for substrate; it reads KH. Glu-262 serves as the catalytic Proton donor. Gly-266 is a binding site for substrate. The cysteines at positions 272 and 315 are disulfide-linked. Residues Asp-329 and Arg-376 each coordinate substrate. Cys-470 and Cys-505 are oxidised to a cystine.

Belongs to the glycosyl hydrolase 13 family. Requires Ca(2+) as cofactor.

The catalysed reaction is Endohydrolysis of (1-&gt;4)-alpha-D-glucosidic linkages in polysaccharides containing three or more (1-&gt;4)-alpha-linked D-glucose units.. The sequence is that of Alpha-amylase 2 (SWA2) from Schwanniomyces occidentalis (Yeast).